The following is an 827-amino-acid chain: Leucine--tRNA ligase (827 aa).

Residues Pro46–His56 carry the 'HIGH' region motif. The 'KMSKS' region motif lies at Lys585–Ser589. Lys588 is an ATP binding site.

It belongs to the class-I aminoacyl-tRNA synthetase family.

It is found in the cytoplasm. The enzyme catalyses tRNA(Leu) + L-leucine + ATP = L-leucyl-tRNA(Leu) + AMP + diphosphate. The polypeptide is Leucine--tRNA ligase (Desulfotalea psychrophila (strain LSv54 / DSM 12343)).